The chain runs to 475 residues: 1-aminocyclopropane-1-carboxylate synthase CMA101 (475 aa).

Lys-272 is subject to N6-(pyridoxal phosphate)lysine.

This sequence belongs to the class-I pyridoxal-phosphate-dependent aminotransferase family. In terms of assembly, homodimer. It depends on pyridoxal 5'-phosphate as a cofactor.

It carries out the reaction S-adenosyl-L-methionine = 1-aminocyclopropane-1-carboxylate + S-methyl-5'-thioadenosine + H(+). It functions in the pathway alkene biosynthesis; ethylene biosynthesis via S-adenosyl-L-methionine; ethylene from S-adenosyl-L-methionine: step 1/2. Its function is as follows. Catalyzes the formation of 1-aminocyclopropane-1-carboxylate, a direct precursor of ethylene in higher plants. This is 1-aminocyclopropane-1-carboxylate synthase CMA101 (ACS2) from Cucurbita maxima (Pumpkin).